Consider the following 244-residue polypeptide: 7-cyano-7-deazaguanine synthase (244 aa).

14–24 is a binding site for ATP; it reads FSGGQDSATCV. Cysteine 202, cysteine 217, cysteine 220, and cysteine 223 together coordinate Zn(2+).

This sequence belongs to the QueC family. It depends on Zn(2+) as a cofactor.

The catalysed reaction is 7-carboxy-7-deazaguanine + NH4(+) + ATP = 7-cyano-7-deazaguanine + ADP + phosphate + H2O + H(+). It participates in purine metabolism; 7-cyano-7-deazaguanine biosynthesis. In terms of biological role, catalyzes the ATP-dependent conversion of 7-carboxy-7-deazaguanine (CDG) to 7-cyano-7-deazaguanine (preQ(0)). This chain is 7-cyano-7-deazaguanine synthase, found in Burkholderia cenocepacia (strain ATCC BAA-245 / DSM 16553 / LMG 16656 / NCTC 13227 / J2315 / CF5610) (Burkholderia cepacia (strain J2315)).